A 240-amino-acid polypeptide reads, in one-letter code: uncharacterized protein (240 aa).

Helical transmembrane passes span 12–32, 66–86, and 89–109; these read ICIH…ILMS, IQVL…FVLV, and ISGY…IYFF. N-linked (GlcNAc...) asparagine; by host glycosylation is found at Asn-129 and Asn-157.

Its subcellular location is the membrane. This is an uncharacterized protein from Acanthamoeba polyphaga mimivirus (APMV).